Consider the following 2028-residue polypeptide: Pecanex-like protein 3 (2028 aa).

2 helical membrane-spanning segments follow: residues 33–53 (CFHL…YMVL) and 54–74 (PPSL…FATI). Residue Asn-95 is glycosylated (N-linked (GlcNAc...) asparagine). The segment at 96-116 (STMGEQEEEAAQGESSLPRDP) is disordered. Ser-127 is modified (phosphoserine). Thr-129 bears the Phosphothreonine mark. Disordered stretches follow at residues 193–239 (IGDL…PMSP) and 263–625 (LVRT…SHSR). The segment covering 198–208 (QTPPGVVPDPS) has biased composition (pro residues). 2 stretches are compositionally biased toward basic and acidic residues: residues 263 to 273 (LVRTSSRREQC) and 305 to 319 (TDRE…EKTN). Asn-319 carries N-linked (GlcNAc...) asparagine glycosylation. Thr-370 is subject to Phosphothreonine. Phosphoserine occurs at positions 392 and 431. The segment covering 427 to 437 (GSELSPASSLR) has biased composition (polar residues). The span at 444 to 459 (TDSSSSTSCYSPESSQ) shows a compositional bias: low complexity. The span at 488–497 (TQRTPSTASA) shows a compositional bias: polar residues. A phosphoserine mark is found at Ser-505 and Ser-521. Helical transmembrane passes span 793–815 (NIFG…LKGF), 819–836 (IWVF…YSLL), 852–872 (WVIA…IWLL), 880–900 (PFPP…FFCA), 903–923 (VATV…LPQV), 946–968 (SPLT…YGFC), and 980–1000 (HVPV…YHLS). At Ser-1025 the chain carries Phosphoserine. Helical transmembrane passes span 1053-1073 (LVMC…TVFI), 1078-1098 (VLGF…HYLL), 1244-1264 (FVLT…HAFA), and 1280-1300 (LLSG…VFIM). Ser-1697 bears the Phosphoserine mark. Residue Asn-1770 is glycosylated (N-linked (GlcNAc...) asparagine). Positions 1845–2028 (GLTSLSNHPP…AAQPLLEHQY (184 aa)) are disordered. Residues 1890–1921 (RPPPLLQWPPPRLPGPPPASPAPTEGPRPSRP) are compositionally biased toward pro residues. Phosphoserine is present on residues Ser-1909 and Ser-1955. Positions 1966–1977 (PLDLSLSPDVSS) are enriched in low complexity. Over residues 1978-1987 (EASPARTTQD) the composition is skewed to polar residues.

Belongs to the pecanex family.

The protein resides in the membrane. The protein is Pecanex-like protein 3 of Mus musculus (Mouse).